The sequence spans 264 residues: Thymidylate synthase (264 aa).

Arg-21 lines the dUMP pocket. His-51 serves as a coordination point for (6R)-5,10-methylene-5,6,7,8-tetrahydrofolate. A dUMP-binding site is contributed by 126 to 127 (RR). The Nucleophile role is filled by Cys-146. Residues 166–169 (RSAD), Asn-177, and 207–209 (HLY) each bind dUMP. Position 169 (Asp-169) interacts with (6R)-5,10-methylene-5,6,7,8-tetrahydrofolate. Ala-263 serves as a coordination point for (6R)-5,10-methylene-5,6,7,8-tetrahydrofolate.

This sequence belongs to the thymidylate synthase family. Bacterial-type ThyA subfamily. In terms of assembly, homodimer.

The protein localises to the cytoplasm. It carries out the reaction dUMP + (6R)-5,10-methylene-5,6,7,8-tetrahydrofolate = 7,8-dihydrofolate + dTMP. It functions in the pathway pyrimidine metabolism; dTTP biosynthesis. Functionally, catalyzes the reductive methylation of 2'-deoxyuridine-5'-monophosphate (dUMP) to 2'-deoxythymidine-5'-monophosphate (dTMP) while utilizing 5,10-methylenetetrahydrofolate (mTHF) as the methyl donor and reductant in the reaction, yielding dihydrofolate (DHF) as a by-product. This enzymatic reaction provides an intracellular de novo source of dTMP, an essential precursor for DNA biosynthesis. The sequence is that of Thymidylate synthase from Rhodopirellula baltica (strain DSM 10527 / NCIMB 13988 / SH1).